We begin with the raw amino-acid sequence, 541 residues long: MAKEIKFAEEARRSLEAGVNKLADTVKVTLGPKGRNVIIDKKFGSPLITNDGVTIAREIELEDAYENMGAQLVKEVATKTNDVAGDGTTTATLLAQAIIREGLKNVAAGANPMILKKGIQKAVDVAVEELKNTSQKVEGKEAIAQIGAVSAADEEIGQLIADAMEKVGNDGVITVEESKSMGTTLDVVEGMQFDRGYLSAYMVTDTEKMEAVFNDPYILLTDKKINTVQEILPVLEQIVQQGRKLLIIAEDIEGEALATLVLNKLRGTFECVAVKAPGFGDRRKAMLDDIAVLTGATVISDELGYDLKTATIDMLGTARTVKVDKDNTTIVEGAGDSSAIKDRVNQIKRQIEETTSDFDKEKLQERLAKLSGGVAVIQVGAATETELKERKLRIEDALNATRAGVEEGMVAGGGASLVHVIPAVEALLETTEGDERTGVKIIRRALEEPLRQIAANAGLEGSVIVEKVMSSEKGIGFDALTEKYVNMIEAGIVDPTKVTRSALQNAASVSAMLLTTEGAIVDIKSDEPSMPGGMGGGMPMM.

ATP is bound by residues 29-32 (TLGP), 86-90 (DGTTT), glycine 413, 478-480 (DAL), and aspartate 494.

It belongs to the chaperonin (HSP60) family. Forms a cylinder of 14 subunits composed of two heptameric rings stacked back-to-back. Interacts with the co-chaperonin GroES.

The protein resides in the cytoplasm. It catalyses the reaction ATP + H2O + a folded polypeptide = ADP + phosphate + an unfolded polypeptide.. Together with its co-chaperonin GroES, plays an essential role in assisting protein folding. The GroEL-GroES system forms a nano-cage that allows encapsulation of the non-native substrate proteins and provides a physical environment optimized to promote and accelerate protein folding. The protein is Chaperonin GroEL of Alkaliphilus oremlandii (strain OhILAs) (Clostridium oremlandii (strain OhILAs)).